The sequence spans 347 residues: NADH-ubiquinone oxidoreductase chain 2 (347 aa).

9 helical membrane passes run 3-23 (PPILIIIMFTVISGTIMVLMS), 25-45 (HWLMIWIGFEMNMLAIIPILM), 67-87 (SMLLMLGIIMNLLLTGQWAVL), 150-170 (NPHLLMTMALMSVLVGGWGGL), 178-198 (ILAYSSIAHMGWMIAVMTYSP), 201-221 (MLLNLSIYITMTLGTFMLFMF), 237-257 (LPLITSLILIIMLSLGGLPPL), 274-294 (NMIITTMLMTITALLNLYFYM), and 323-343 (MTMLPPLIVISTMLLPLTPMM).

This sequence belongs to the complex I subunit 2 family. Core subunit of respiratory chain NADH dehydrogenase (Complex I) which is composed of 45 different subunits. Interacts with TMEM242.

The protein localises to the mitochondrion inner membrane. The enzyme catalyses a ubiquinone + NADH + 5 H(+)(in) = a ubiquinol + NAD(+) + 4 H(+)(out). Its function is as follows. Core subunit of the mitochondrial membrane respiratory chain NADH dehydrogenase (Complex I) which catalyzes electron transfer from NADH through the respiratory chain, using ubiquinone as an electron acceptor. Essential for the catalytic activity and assembly of complex I. The polypeptide is NADH-ubiquinone oxidoreductase chain 2 (Mustela kathiah (Yellow-bellied weasel)).